The primary structure comprises 658 residues: Carnitine O-palmitoyltransferase 2, mitochondrial (658 aa).

A mitochondrion-targeting transit peptide spans 1–25 (MMPRLLLRDWPRCPSLVLGAPSRPL). The Mitochondrial matrix segment spans residues 26-178 (SAVSGPAEYL…GLLEPEVFHL (153 aa)). Position 69 is an N6-succinyllysine (K69). K79 bears the N6-acetyllysine mark. K85 bears the N6-succinyllysine mark. The note=Mitochondrial inner membrane intramembrane region spans 179-208 (NPARSDTDAFKRLIRFVPSSLSWYGAYLVN). The Mitochondrial matrix portion of the chain corresponds to 209–658 (AYPLDMSQYF…DALEGKAIKT (450 aa)). At K239 the chain carries N6-acetyllysine; alternate. K239 is subject to N6-succinyllysine; alternate. Position 305 is an N6-acetyllysine (K305). Catalysis depends on H372, which acts as the Proton acceptor. K418 carries the N6-acetyllysine; alternate modification. Residue K418 is modified to N6-succinyllysine; alternate. K424 and K439 each carry N6-succinyllysine. 452–464 (GKEFLKKKKLSPD) is a binding site for CoA. (R)-carnitine-binding residues include Y486, S488, and T499. N6-acetyllysine; alternate occurs at positions 510 and 544. An N6-succinyllysine; alternate mark is found at K510 and K544.

This sequence belongs to the carnitine/choline acetyltransferase family.

It localises to the mitochondrion inner membrane. It catalyses the reaction (R)-carnitine + hexadecanoyl-CoA = O-hexadecanoyl-(R)-carnitine + CoA. The catalysed reaction is octanoyl-CoA + (R)-carnitine = O-octanoyl-(R)-carnitine + CoA. It carries out the reaction decanoyl-CoA + (R)-carnitine = O-decanoyl-(R)-carnitine + CoA. The enzyme catalyses dodecanoyl-CoA + (R)-carnitine = O-dodecanoyl-R-carnitine + CoA. It catalyses the reaction tetradecanoyl-CoA + (R)-carnitine = O-tetradecanoyl-(R)-carnitine + CoA. The catalysed reaction is (R)-carnitine + octadecanoyl-CoA = O-octadecanoyl-(R)-carnitine + CoA. It carries out the reaction eicosanoyl-CoA + (R)-carnitine = O-eicosanoyl-(R)-carnitine + CoA. The enzyme catalyses (9Z)-tetradecenoyl-CoA + (R)-carnitine = O-(9Z)-tetradecenoyl-(R)-carnitine + CoA. It catalyses the reaction (5Z)-tetradecenoyl-CoA + (R)-carnitine = O-(5Z)-tetradecenoyl-(R)-carnitine + CoA. The catalysed reaction is (R)-carnitine + (9Z)-octadecenoyl-CoA = O-(9Z)-octadecenoyl-(R)-carnitine + CoA. It carries out the reaction 4,8-dimethylnonanoyl-CoA + (R)-carnitine = O-4,8-dimethylnonanoyl-(R)-carnitine + CoA. It participates in lipid metabolism; fatty acid beta-oxidation. In terms of biological role, involved in the intramitochondrial synthesis of acylcarnitines from accumulated acyl-CoA metabolites. Reconverts acylcarnitines back into the respective acyl-CoA esters that can then undergo beta-oxidation, an essential step for the mitochondrial uptake of long-chain fatty acids and their subsequent beta-oxidation in the mitochondrion. Active with medium (C8-C12) and long-chain (C14-C18) acyl-CoA esters. This is Carnitine O-palmitoyltransferase 2, mitochondrial from Mus musculus (Mouse).